We begin with the raw amino-acid sequence, 72 residues long: Translation initiation factor IF-1 (72 aa).

Residues 1–72 (MAKEDCIEME…TKGRIKFRSK (72 aa)) form the S1-like domain.

This sequence belongs to the IF-1 family. As to quaternary structure, component of the 30S ribosomal translation pre-initiation complex which assembles on the 30S ribosome in the order IF-2 and IF-3, IF-1 and N-formylmethionyl-tRNA(fMet); mRNA recruitment can occur at any time during PIC assembly.

It is found in the cytoplasm. One of the essential components for the initiation of protein synthesis. Stabilizes the binding of IF-2 and IF-3 on the 30S subunit to which N-formylmethionyl-tRNA(fMet) subsequently binds. Helps modulate mRNA selection, yielding the 30S pre-initiation complex (PIC). Upon addition of the 50S ribosomal subunit IF-1, IF-2 and IF-3 are released leaving the mature 70S translation initiation complex. The polypeptide is Translation initiation factor IF-1 (Francisella tularensis subsp. tularensis (strain WY96-3418)).